We begin with the raw amino-acid sequence, 331 residues long: Glycerophosphodiester phosphodiesterase 1 (331 aa).

Residues 1-2 are Cytoplasmic-facing; the sequence is MW. Residues 3-23 form a helical membrane-spanning segment; it reads LWEEQGGLMGPFSFLLLVLLL. The Lumenal segment spans residues 24–254; sequence LTRSPFNACL…WKQSMFVALD (231 aa). The GP-PDE domain maps to 65–331; the sequence is VSAIAHRGGS…SMLEDCTPEF (267 aa). The Mg(2+) site is built by E97 and D99. N168 is a glycosylation site (N-linked (GlcNAc...) asparagine). D174 contacts Mg(2+). N198 is a glycosylation site (N-linked (GlcNAc...) asparagine). The helical transmembrane segment at 255 to 275 threads the bilayer; that stretch reads ILLDWSMHNILWYLCGVSAFL. Residues 276–331 lie on the Cytoplasmic side of the membrane; sequence AQKDFISPDYVKKWSAKGIQVVAWTVNTFDEKSYYESHLGSSYITDSMLEDCTPEF.

It belongs to the glycerophosphoryl diester phosphodiesterase family. Interacts with PRAF2. Interacts with RGS16. The cofactor is Mg(2+). In terms of processing, N-glycosylated.

It is found in the cell membrane. It localises to the cytoplasmic vesicle membrane. The enzyme catalyses sn-glycero-3-phospho-1D-myo-inositol + H2O = myo-inositol + sn-glycerol 3-phosphate + H(+). It carries out the reaction 1-O-(1Z-octadecenyl)-sn-glycero-3-phospho-(N-5Z,8Z,11Z,14Z-eicosatetraenoyl)-ethanolamine + H2O = 1-O-(1Z-octadecenyl)-sn-glycero-3-phosphate + N-(5Z,8Z,11Z,14Z-eicosatetraenoyl)-ethanolamine + H(+). It catalyses the reaction 1-O-(1Z-octadecenyl)-sn-glycero-3-phospho-(N-9Z-octadecenoyl)-ethanolamine + H2O = 1-O-(1Z-octadecenyl)-sn-glycero-3-phosphate + N-(9Z-octadecenoyl) ethanolamine + H(+). The catalysed reaction is 1-O-(1Z-octadecenyl)-sn-glycero-3-phospho-N-hexadecanoyl-ethanolamine + H2O = 1-O-(1Z-octadecenyl)-sn-glycero-3-phosphate + N-hexadecanoylethanolamine + H(+). The enzyme catalyses N-(4Z,7Z,10Z,13Z,16Z,19Z)-docosahexaenoyl-sn-glycero-3-phosphoethanolamine + H2O = N-(4Z,7Z,10Z,13Z,16Z,19Z)-docosahexaenoyl ethanolamine + sn-glycerol 3-phosphate + H(+). It carries out the reaction N-eicosanoyl-sn-glycero-3-phosphoethanolamine + H2O = N-eicosanoyl ethanolamine + sn-glycerol 3-phosphate + H(+). It catalyses the reaction N-hexadecanoyl-sn-glycero-3-phosphoethanolamine + H2O = N-hexadecanoylethanolamine + sn-glycerol 3-phosphate + H(+). The catalysed reaction is N-(9Z-octadecenoyl)-sn-glycero-3-phosphoethanolamine + H2O = N-(9Z-octadecenoyl) ethanolamine + sn-glycerol 3-phosphate + H(+). The enzyme catalyses N-(5Z,8Z,11Z,14Z-eicosatetraenoyl)-sn-glycero-3-phosphoethanolamine + H2O = N-(5Z,8Z,11Z,14Z-eicosatetraenoyl)-ethanolamine + sn-glycerol 3-phosphate + H(+). Inhibited by EDTA, calcium chloride, and zinc chloride. Enhanced by magnesium chloride. Glycerophosphodiester phosphodiesterase activity can be modulated by G-protein signaling pathways. Hydrolyzes the phosphodiester bond of glycerophosphodiesters such as glycerophosphoinositol (GroPIns) and glycerophosphoethanolamine (GroPEth), to yield a glycerol phosphate and an alcohol. Hydrolyzes glycerophospho-N-acylethanolamines to N-acylethanolamines in the brain and participates in bioactive N-acylethanolamine biosynthesis such as anandamide (an endocannabinoid), N-palmitoylethanolamine (an anti-inflammatory), and N-oleoylethanolamine (an anorexic). In addition, has a lysophospholipase D activity by hydrolyzing N-acyl-lysoplasmenylethanolamine (N-acyl-lysoPlsEt) to N-acylethanolamine. However lysophospholipase D activity is lower than glycerophosphodiester phosphodiesterase activity. Has little or no activity towards glycerophosphocholine. This chain is Glycerophosphodiester phosphodiesterase 1, found in Bos taurus (Bovine).